Consider the following 595-residue polypeptide: Alpha-1,3-galactosidase B (595 aa).

A signal peptide spans 1-22; that stretch reads MKTILLFALSLLLSLSVSDVCA. 3 PbH1 repeats span residues 432–454, 455–477, and 488–541; these read TPEV…LFST, PKKT…LLCG, and CRDV…VIED.

The protein belongs to the glycosyl hydrolase 110 family. B subfamily.

The catalysed reaction is Hydrolysis of terminal, non-reducing branched (1-&gt;3)-alpha-D-galactosidic residues, producing free D-galactose.. The enzyme catalyses Hydrolysis of terminal, non-reducing linear (1-&gt;3)-alpha-D-galactosidic residues, producing free D-galactose.. It carries out the reaction Hydrolysis of terminal, non-reducing alpha-D-galactose residues in alpha-D-galactosides, including galactose oligosaccharides, galactomannans and galactolipids.. Its function is as follows. Alpha-galactosidase. Removes both branched alpha-1,3-linked galactose residues of blood group B antigens and linear alpha-1,3-linked galactose structures. In Bacteroides fragilis (strain YCH46), this protein is Alpha-1,3-galactosidase B (glaB).